The chain runs to 634 residues: 1-deoxy-D-xylulose-5-phosphate synthase (634 aa).

Thiamine diphosphate contacts are provided by residues H79 and 120–122; that span reads GHA. A Mg(2+)-binding site is contributed by D151. Residues 152–153, N180, Y292, and E376 contribute to the thiamine diphosphate site; that span reads GS. Position 180 (N180) interacts with Mg(2+).

The protein belongs to the transketolase family. DXPS subfamily. In terms of assembly, homodimer. Mg(2+) is required as a cofactor. Thiamine diphosphate serves as cofactor.

The enzyme catalyses D-glyceraldehyde 3-phosphate + pyruvate + H(+) = 1-deoxy-D-xylulose 5-phosphate + CO2. It participates in metabolic intermediate biosynthesis; 1-deoxy-D-xylulose 5-phosphate biosynthesis; 1-deoxy-D-xylulose 5-phosphate from D-glyceraldehyde 3-phosphate and pyruvate: step 1/1. In terms of biological role, catalyzes the acyloin condensation reaction between C atoms 2 and 3 of pyruvate and glyceraldehyde 3-phosphate to yield 1-deoxy-D-xylulose-5-phosphate (DXP). The sequence is that of 1-deoxy-D-xylulose-5-phosphate synthase from Porphyromonas gingivalis (strain ATCC BAA-308 / W83).